Here is a 317-residue protein sequence, read N- to C-terminus: tRNA pseudouridine synthase B (317 aa).

Asp-47 serves as the catalytic Nucleophile.

The protein belongs to the pseudouridine synthase TruB family. Type 1 subfamily.

It catalyses the reaction uridine(55) in tRNA = pseudouridine(55) in tRNA. Its function is as follows. Responsible for synthesis of pseudouridine from uracil-55 in the psi GC loop of transfer RNAs. This is tRNA pseudouridine synthase B from Shewanella sp. (strain ANA-3).